Consider the following 147-residue polypeptide: Hemoglobin subunit beta (147 aa).

N-acetylvaline is present on valine 2. Residues 3–147 enclose the Globin domain; the sequence is HLSGDEKNAV…VANALAHRYH (145 aa). Position 45 is a phosphoserine (serine 45). Lysine 60 carries the post-translational modification N6-acetyllysine. Histidine 64 serves as a coordination point for heme b. At lysine 83 the chain carries N6-acetyllysine. Residue histidine 93 participates in heme b binding. The residue at position 94 (cysteine 94) is an S-nitrosocysteine.

It belongs to the globin family. Heterotetramer of two alpha chains and two beta chains. In terms of tissue distribution, red blood cells.

Functionally, involved in oxygen transport from the lung to the various peripheral tissues. This Camelus dromedarius (Dromedary) protein is Hemoglobin subunit beta (HBB).